Here is a 459-residue protein sequence, read N- to C-terminus: ATP synthase subunit beta (459 aa).

148-155 (GGAGVGKT) provides a ligand contact to ATP.

Belongs to the ATPase alpha/beta chains family. F-type ATPases have 2 components, CF(1) - the catalytic core - and CF(0) - the membrane proton channel. CF(1) has five subunits: alpha(3), beta(3), gamma(1), delta(1), epsilon(1). CF(0) has three main subunits: a(1), b(2) and c(9-12). The alpha and beta chains form an alternating ring which encloses part of the gamma chain. CF(1) is attached to CF(0) by a central stalk formed by the gamma and epsilon chains, while a peripheral stalk is formed by the delta and b chains.

It localises to the cell inner membrane. The catalysed reaction is ATP + H2O + 4 H(+)(in) = ADP + phosphate + 5 H(+)(out). Its function is as follows. Produces ATP from ADP in the presence of a proton gradient across the membrane. The catalytic sites are hosted primarily by the beta subunits. This Cellvibrio japonicus (strain Ueda107) (Pseudomonas fluorescens subsp. cellulosa) protein is ATP synthase subunit beta.